A 238-amino-acid chain; its full sequence is MERKKAVVLLSGGLDSSTVLAYAISLGYEVHAISFDYGQRHSREMNSSEELAKYYGVDRKIVHVDLRSIGKSALTDDIEVPSRDLESIPEEIPVTYVPARNTIFLSIAAAYAESIGSTDIFIGANAIDYSGYPDCRPEYFNAMEKALTLGTEIGLRKGMHINVPLQYLTKADIIRMGLKLGVPYEKTWSCYKGGEKACGECDSCLLRLKGFMEAGSEDPLEYEKYPTFYKDYIEKRKK.

10 to 20 (LSGGLDSSTVL) is a binding site for ATP. 4 residues coordinate Zn(2+): cysteine 190, cysteine 198, cysteine 201, and cysteine 204.

It belongs to the QueC family. Requires Zn(2+) as cofactor.

The enzyme catalyses 7-carboxy-7-deazaguanine + NH4(+) + ATP = 7-cyano-7-deazaguanine + ADP + phosphate + H2O + H(+). Its pathway is purine metabolism; 7-cyano-7-deazaguanine biosynthesis. Functionally, catalyzes the ATP-dependent conversion of 7-carboxy-7-deazaguanine (CDG) to 7-cyano-7-deazaguanine (preQ(0)). The chain is 7-cyano-7-deazaguanine synthase from Thermoplasma acidophilum (strain ATCC 25905 / DSM 1728 / JCM 9062 / NBRC 15155 / AMRC-C165).